We begin with the raw amino-acid sequence, 781 residues long: Dynamin-related protein dnm1 (781 aa).

Residues 23 to 328 (FLDLPSIVVV…LVSHIRERLP (306 aa)) form the Dynamin-type G domain. A G1 motif region spans residues 33-40 (GSQSCGKS). Residue 33-40 (GSQSCGKS) coordinates GTP. The tract at residues 59-61 (VTR) is G2 motif. Positions 76 to 103 (KNNHDEESTSDNNSEETSAAGETGSLEG) are disordered. The segment at 170–173 (DLPG) is G3 motif. GTP is bound by residues 170–174 (DLPGL) and 239–242 (TKLD). The segment at 239–242 (TKLD) is G4 motif. The interval 269–272 (VNRS) is G5 motif. The 88-residue stretch at 694–781 (VDLIKELITS…QANKIISTVF (88 aa)) folds into the GED domain.

Belongs to the TRAFAC class dynamin-like GTPase superfamily. Dynamin/Fzo/YdjA family.

It is found in the cytoplasm. The protein localises to the mitochondrion outer membrane. The catalysed reaction is GTP + H2O = GDP + phosphate + H(+). Microtubule-associated force-producing protein that mediates mitochondrial fission during interphasic growth and at cell division. Fission of mitochondria occurs in many cell types and constitutes an important step in mitochondria morphology, which is balanced between fusion and fission. With vps1, acts redundantly in peroxisome biogenesis, which is under cell cycle control. The chain is Dynamin-related protein dnm1 (dnm1) from Schizosaccharomyces pombe (strain 972 / ATCC 24843) (Fission yeast).